Reading from the N-terminus, the 37-residue chain is Large ribosomal subunit protein bL36 (37 aa).

Belongs to the bacterial ribosomal protein bL36 family.

This Desulforapulum autotrophicum (strain ATCC 43914 / DSM 3382 / VKM B-1955 / HRM2) (Desulfobacterium autotrophicum) protein is Large ribosomal subunit protein bL36.